A 511-amino-acid polypeptide reads, in one-letter code: Putative CBL-interacting protein kinase 13 (511 aa).

One can recognise a Protein kinase domain in the interval 25–279 (FEVGKLLGQG…AEGIMENEWF (255 aa)). ATP-binding positions include 31-39 (LGQGNFAKV) and Lys-54. Residue Asp-147 is the Proton acceptor of the active site. Residues 165–194 (DFGLSAVADGMRRDGLFHTFCGTPAYVAPE) form an activation loop region. Residues 307–340 (VDAPTSPPDTPRTVDSGDVGAAPTRPRKAGSLTS) form a disordered region. One can recognise an NAF domain in the interval 321-383 (DSGDVGAAPT…PGFDLSGLFD (63 aa)). A PPI region spans residues 400 to 429 (KHTARFVSAAPVEVIVATLEAAAAAAGMAV).

The protein belongs to the protein kinase superfamily. CAMK Ser/Thr protein kinase family. SNF1 subfamily. It depends on Mn(2+) as a cofactor.

It carries out the reaction L-seryl-[protein] + ATP = O-phospho-L-seryl-[protein] + ADP + H(+). The enzyme catalyses L-threonyl-[protein] + ATP = O-phospho-L-threonyl-[protein] + ADP + H(+). Its function is as follows. CIPK serine-threonine protein kinases interact with CBL proteins. Binding of a CBL protein to the regulatory NAF domain of CIPK protein lead to the activation of the kinase in a calcium-dependent manner. The chain is Putative CBL-interacting protein kinase 13 (CIPK13) from Oryza sativa subsp. japonica (Rice).